The sequence spans 259 residues: Global transcriptional regulator CodY (259 aa).

The tract at residues 1-155 (MNLLEKTRKI…GATVVGMEIL (155 aa)) is GAF domain. A DNA-binding region (H-T-H motif) is located at residues 203–222 (ASKIADRVGITRSVIVNALR). Ser215 carries the phosphoserine modification.

Belongs to the CodY family.

It is found in the cytoplasm. Its function is as follows. DNA-binding global transcriptional regulator which is involved in the adaptive response to starvation and acts by directly or indirectly controlling the expression of numerous genes in response to nutrient availability. During rapid exponential growth, CodY is highly active and represses genes whose products allow adaptation to nutrient depletion. This Anoxybacillus flavithermus (strain DSM 21510 / WK1) protein is Global transcriptional regulator CodY.